A 194-amino-acid polypeptide reads, in one-letter code: Large ribosomal subunit protein bL9 (194 aa).

Positions 165–194 (PEDAEEAVANEEEAEAALLDDEDADEYEQG) are disordered. Residues 166 to 194 (EDAEEAVANEEEAEAALLDDEDADEYEQG) show a composition bias toward acidic residues.

Belongs to the bacterial ribosomal protein bL9 family.

Binds to the 23S rRNA. The polypeptide is Large ribosomal subunit protein bL9 (Rhodospirillum rubrum (strain ATCC 11170 / ATH 1.1.1 / DSM 467 / LMG 4362 / NCIMB 8255 / S1)).